We begin with the raw amino-acid sequence, 238 residues long: Ribosomal RNA large subunit methyltransferase E (238 aa).

The S-adenosyl-L-methionine site is built by G76, W78, D99, D115, and D139. K179 (proton acceptor) is an active-site residue.

This sequence belongs to the class I-like SAM-binding methyltransferase superfamily. RNA methyltransferase RlmE family.

The protein localises to the cytoplasm. The enzyme catalyses uridine(2552) in 23S rRNA + S-adenosyl-L-methionine = 2'-O-methyluridine(2552) in 23S rRNA + S-adenosyl-L-homocysteine + H(+). Specifically methylates the uridine in position 2552 of 23S rRNA at the 2'-O position of the ribose in the fully assembled 50S ribosomal subunit. The polypeptide is Ribosomal RNA large subunit methyltransferase E (Rhodopseudomonas palustris (strain BisB18)).